The following is a 424-amino-acid chain: Magnesium-chelatase subunit ChlI-1, chloroplastic (424 aa).

A chloroplast-targeting transit peptide spans 1 to 60 (MASLLGTSSSAIWASPSLSSPSSKPSSSPICFRPGKLFGSKLNAGIQIRPKKNRSRYHVS). Val-61 carries the post-translational modification N-acetylvaline. Intrachain disulfides connect Cys-102-Cys-193 and Cys-354-Cys-396. Position 119 to 126 (119 to 126 (GDRGTGKS)) interacts with ATP. A Phosphoserine modification is found at Ser-355.

This sequence belongs to the Mg-chelatase subunits D/I family. The magnesium chelatase complex is a heterotrimer consisting of subunits CHLI, CHLD and CHLH. Interacts with CHLH and CHLD.

The protein resides in the plastid. It is found in the chloroplast. The catalysed reaction is protoporphyrin IX + Mg(2+) + ATP + H2O = Mg-protoporphyrin IX + ADP + phosphate + 3 H(+). Its pathway is porphyrin-containing compound metabolism; chlorophyll biosynthesis. Redox regulation; active in reducing conditions, inactive in oxidizing conditions. Thioredoxins f and m mediate the reversible reductive activation of oxidized CHLI1. Its function is as follows. Involved in chlorophyll biosynthesis. Catalyzes the insertion of magnesium ion into protoporphyrin IX to yield Mg-protoporphyrin IX. The magnesium-chelatase is a complex of three subunits, CHLI, CHLD and CHLH. The reaction takes place in two steps, with an ATP-dependent activation followed by an ATP-dependent chelation step. Possesses high affinity for ATP and may play a major role in chlorophyll biosynthesis. Does not bind abscisic acid (ABA), but is a positive regulator of ABA signaling. May be involved in ABA signaling in the control of stomatal aperture, but does not seem to have an effect on ABA-induced gene expression. In Arabidopsis thaliana (Mouse-ear cress), this protein is Magnesium-chelatase subunit ChlI-1, chloroplastic (CHLI1).